Here is a 162-residue protein sequence, read N- to C-terminus: 2-C-methyl-D-erythritol 2,4-cyclodiphosphate synthase (162 aa).

The a divalent metal cation site is built by aspartate 8 and histidine 10. 4-CDP-2-C-methyl-D-erythritol 2-phosphate contacts are provided by residues 8–10 (DVH) and 36–37 (HS). Histidine 44 is a binding site for a divalent metal cation. 4-CDP-2-C-methyl-D-erythritol 2-phosphate is bound by residues 58–60 (DIG), 63–67 (FPDTD), 102–108 (AQAPKMA), 134–137 (TTTE), phenylalanine 141, and arginine 144.

The protein belongs to the IspF family. Homotrimer. The cofactor is a divalent metal cation.

The enzyme catalyses 4-CDP-2-C-methyl-D-erythritol 2-phosphate = 2-C-methyl-D-erythritol 2,4-cyclic diphosphate + CMP. It participates in isoprenoid biosynthesis; isopentenyl diphosphate biosynthesis via DXP pathway; isopentenyl diphosphate from 1-deoxy-D-xylulose 5-phosphate: step 4/6. Involved in the biosynthesis of isopentenyl diphosphate (IPP) and dimethylallyl diphosphate (DMAPP), two major building blocks of isoprenoid compounds. Catalyzes the conversion of 4-diphosphocytidyl-2-C-methyl-D-erythritol 2-phosphate (CDP-ME2P) to 2-C-methyl-D-erythritol 2,4-cyclodiphosphate (ME-CPP) with a corresponding release of cytidine 5-monophosphate (CMP). The protein is 2-C-methyl-D-erythritol 2,4-cyclodiphosphate synthase of Yersinia pseudotuberculosis serotype IB (strain PB1/+).